A 39-amino-acid polypeptide reads, in one-letter code: Large ribosomal subunit protein bL12 (39 aa).

The protein belongs to the bacterial ribosomal protein bL12 family. As to quaternary structure, homodimer. Part of the ribosomal stalk of the 50S ribosomal subunit. Forms a multimeric L10(L12)X complex, where L10 forms an elongated spine to which 2 to 4 L12 dimers bind in a sequential fashion. Binds GTP-bound translation factors.

Functionally, forms part of the ribosomal stalk which helps the ribosome interact with GTP-bound translation factors. Is thus essential for accurate translation. This chain is Large ribosomal subunit protein bL12 (rplL), found in Arthrobacter glacialis.